Consider the following 292-residue polypeptide: uncharacterized protein (292 aa).

The HTH lysR-type domain maps to Met1–Thr59. A DNA-binding region (H-T-H motif) is located at residues Phe18 to Ser37.

The protein belongs to the LysR transcriptional regulatory family.

This is an uncharacterized protein from Bacillus subtilis (strain 168).